Reading from the N-terminus, the 403-residue chain is Propionate kinase (403 aa).

Belongs to the acetokinase family. PduW subfamily.

It localises to the cytoplasm. The catalysed reaction is propanoate + ATP = propanoyl phosphate + ADP. Its pathway is polyol metabolism; 1,2-propanediol degradation. Functionally, works with phosphate acetyltransferase (pta) to capture exogenous propionate and regenerate propionyl-CoA during degradation of 1,2-propanediol (1,2-PD). The sequence is that of Propionate kinase from Citrobacter rodentium (strain ICC168) (Citrobacter freundii biotype 4280).